A 937-amino-acid polypeptide reads, in one-letter code: Isoleucine--tRNA ligase (937 aa).

The 'HIGH' region signature appears at 57–67 (PYANGPIHMGH). Glutamate 556 provides a ligand contact to L-isoleucyl-5'-AMP. Positions 597–601 (KMSKS) match the 'KMSKS' region motif. An ATP-binding site is contributed by lysine 600. Zn(2+) is bound by residues cysteine 895, cysteine 898, cysteine 915, and cysteine 918.

The protein belongs to the class-I aminoacyl-tRNA synthetase family. IleS type 1 subfamily. Monomer. It depends on Zn(2+) as a cofactor.

Its subcellular location is the cytoplasm. The enzyme catalyses tRNA(Ile) + L-isoleucine + ATP = L-isoleucyl-tRNA(Ile) + AMP + diphosphate. Its function is as follows. Catalyzes the attachment of isoleucine to tRNA(Ile). As IleRS can inadvertently accommodate and process structurally similar amino acids such as valine, to avoid such errors it has two additional distinct tRNA(Ile)-dependent editing activities. One activity is designated as 'pretransfer' editing and involves the hydrolysis of activated Val-AMP. The other activity is designated 'posttransfer' editing and involves deacylation of mischarged Val-tRNA(Ile). This chain is Isoleucine--tRNA ligase, found in Levilactobacillus brevis (strain ATCC 367 / BCRC 12310 / CIP 105137 / JCM 1170 / LMG 11437 / NCIMB 947 / NCTC 947) (Lactobacillus brevis).